Here is an 87-residue protein sequence, read N- to C-terminus: Large ribosomal subunit protein bL31B (87 aa).

This sequence belongs to the bacterial ribosomal protein bL31 family. Type B subfamily. As to quaternary structure, part of the 50S ribosomal subunit.

The sequence is that of Large ribosomal subunit protein bL31B from Paraburkholderia phymatum (strain DSM 17167 / CIP 108236 / LMG 21445 / STM815) (Burkholderia phymatum).